A 173-amino-acid chain; its full sequence is NADH-ubiquinone oxidoreductase chain 6 (173 aa).

A run of 5 helical transmembrane segments spans residues 1–21 (MTYF…AVAS), 27–47 (YGVV…LSLG), 48–68 (VSFV…VVFV), 87–107 (VVGY…VGGL), and 139–159 (CGVG…FVVL).

The protein belongs to the complex I subunit 6 family.

The protein resides in the mitochondrion membrane. The catalysed reaction is a ubiquinone + NADH + 5 H(+)(in) = a ubiquinol + NAD(+) + 4 H(+)(out). Functionally, core subunit of the mitochondrial membrane respiratory chain NADH dehydrogenase (Complex I) that is believed to belong to the minimal assembly required for catalysis. Complex I functions in the transfer of electrons from NADH to the respiratory chain. The immediate electron acceptor for the enzyme is believed to be ubiquinone. The protein is NADH-ubiquinone oxidoreductase chain 6 (MT-ND6) of Larus canus (Common gull).